Consider the following 552-residue polypeptide: Formate--tetrahydrofolate ligase (552 aa).

An ATP-binding site is contributed by 62–69 (TPAGEGKS).

Belongs to the formate--tetrahydrofolate ligase family.

It catalyses the reaction (6S)-5,6,7,8-tetrahydrofolate + formate + ATP = (6R)-10-formyltetrahydrofolate + ADP + phosphate. The protein operates within one-carbon metabolism; tetrahydrofolate interconversion. This Ligilactobacillus salivarius (strain UCC118) (Lactobacillus salivarius) protein is Formate--tetrahydrofolate ligase.